The sequence spans 45 residues: Proteinase inhibitor IIA (45 aa).

Intrachain disulfides connect C10-C24, C14-C35, and C20-C43.

Belongs to the protease inhibitor I20 (potato type II proteinase inhibitor) family.

It is found in the secreted. In terms of biological role, inhibits trypsin strongly and chymotrypsin temporarily. The sequence is that of Proteinase inhibitor IIA from Solanum tuberosum (Potato).